A 69-amino-acid chain; its full sequence is uncharacterized protein (69 aa).

An N-terminal signal peptide occupies residues 1 to 16 (MKKIMLFLAMTSILSA). Cys-17 carries the N-palmitoyl cysteine lipid modification. The S-diacylglycerol cysteine moiety is linked to residue Cys-17.

The protein localises to the cell membrane. This is an uncharacterized protein from Bacillus subtilis (strain 168).